Consider the following 218-residue polypeptide: ATP phosphoribosyltransferase (218 aa).

This sequence belongs to the ATP phosphoribosyltransferase family. Short subfamily. In terms of assembly, heteromultimer composed of HisG and HisZ subunits.

The protein localises to the cytoplasm. The enzyme catalyses 1-(5-phospho-beta-D-ribosyl)-ATP + diphosphate = 5-phospho-alpha-D-ribose 1-diphosphate + ATP. Its pathway is amino-acid biosynthesis; L-histidine biosynthesis; L-histidine from 5-phospho-alpha-D-ribose 1-diphosphate: step 1/9. Functionally, catalyzes the condensation of ATP and 5-phosphoribose 1-diphosphate to form N'-(5'-phosphoribosyl)-ATP (PR-ATP). Has a crucial role in the pathway because the rate of histidine biosynthesis seems to be controlled primarily by regulation of HisG enzymatic activity. This chain is ATP phosphoribosyltransferase (hisG), found in Deinococcus radiodurans (strain ATCC 13939 / DSM 20539 / JCM 16871 / CCUG 27074 / LMG 4051 / NBRC 15346 / NCIMB 9279 / VKM B-1422 / R1).